The chain runs to 477 residues: Sporulation-specific protein 77 (477 aa).

The disordered stretch occupies residues 428 to 452 (SQQRESSNAESESITSSTEEDEEGL). Over residues 432 to 444 (ESSNAESESITSS) the composition is skewed to low complexity.

It localises to the cytoplasm. In terms of biological role, required for spore wall assembly and ascus formation. This is Sporulation-specific protein 77 (SPO77) from Saccharomyces cerevisiae (strain ATCC 204508 / S288c) (Baker's yeast).